Reading from the N-terminus, the 207-residue chain is GTP cyclohydrolase 1 (207 aa).

Zn(2+)-binding residues include Cys88, His91, and Cys162.

The protein belongs to the GTP cyclohydrolase I family. As to quaternary structure, toroid-shaped homodecamer, composed of two pentamers of five dimers.

It catalyses the reaction GTP + H2O = 7,8-dihydroneopterin 3'-triphosphate + formate + H(+). It functions in the pathway cofactor biosynthesis; 7,8-dihydroneopterin triphosphate biosynthesis; 7,8-dihydroneopterin triphosphate from GTP: step 1/1. This Sulfurisphaera tokodaii (strain DSM 16993 / JCM 10545 / NBRC 100140 / 7) (Sulfolobus tokodaii) protein is GTP cyclohydrolase 1.